Here is a 244-residue protein sequence, read N- to C-terminus: High frequency lysogenization protein HflD homolog (244 aa).

This sequence belongs to the HflD family.

The protein resides in the cytoplasm. Its subcellular location is the cell inner membrane. This Acinetobacter baumannii (strain SDF) protein is High frequency lysogenization protein HflD homolog.